A 343-amino-acid polypeptide reads, in one-letter code: Phenylalanine--tRNA ligase alpha subunit (343 aa).

Residue E256 participates in Mg(2+) binding.

This sequence belongs to the class-II aminoacyl-tRNA synthetase family. Phe-tRNA synthetase alpha subunit type 1 subfamily. Tetramer of two alpha and two beta subunits. The cofactor is Mg(2+).

It is found in the cytoplasm. The enzyme catalyses tRNA(Phe) + L-phenylalanine + ATP = L-phenylalanyl-tRNA(Phe) + AMP + diphosphate + H(+). This is Phenylalanine--tRNA ligase alpha subunit from Aster yellows witches'-broom phytoplasma (strain AYWB).